Reading from the N-terminus, the 344-residue chain is Probable dual-specificity RNA methyltransferase RlmN (344 aa).

Glu-92 serves as the catalytic Proton acceptor. One can recognise a Radical SAM core domain in the interval 98–325 (DEDRATLCVS…TTIRASRGED (228 aa)). Cys-105 and Cys-330 are oxidised to a cystine. The [4Fe-4S] cluster site is built by Cys-112, Cys-116, and Cys-119. S-adenosyl-L-methionine contacts are provided by residues 157 to 158 (GE), Ser-189, 211 to 213 (SLH), and His-287. Cys-330 (S-methylcysteine intermediate) is an active-site residue.

This sequence belongs to the radical SAM superfamily. RlmN family. Requires [4Fe-4S] cluster as cofactor.

Its subcellular location is the cytoplasm. It carries out the reaction adenosine(2503) in 23S rRNA + 2 reduced [2Fe-2S]-[ferredoxin] + 2 S-adenosyl-L-methionine = 2-methyladenosine(2503) in 23S rRNA + 5'-deoxyadenosine + L-methionine + 2 oxidized [2Fe-2S]-[ferredoxin] + S-adenosyl-L-homocysteine. The catalysed reaction is adenosine(37) in tRNA + 2 reduced [2Fe-2S]-[ferredoxin] + 2 S-adenosyl-L-methionine = 2-methyladenosine(37) in tRNA + 5'-deoxyadenosine + L-methionine + 2 oxidized [2Fe-2S]-[ferredoxin] + S-adenosyl-L-homocysteine. Functionally, specifically methylates position 2 of adenine 2503 in 23S rRNA and position 2 of adenine 37 in tRNAs. In Bacteroides fragilis (strain ATCC 25285 / DSM 2151 / CCUG 4856 / JCM 11019 / LMG 10263 / NCTC 9343 / Onslow / VPI 2553 / EN-2), this protein is Probable dual-specificity RNA methyltransferase RlmN.